Consider the following 837-residue polypeptide: Tuftelin-interacting protein 11 (837 aa).

Basic and acidic residues-rich tracts occupy residues 1–13 and 53–64; these read MSLS…GEGR and VWAERDSDDERP. 3 disordered regions span residues 1 to 21, 53 to 72, and 85 to 133; these read MSLS…DDER, VWAE…KRAR, and LKKG…KGFA. Residues 1-50 form a required for interaction with DHX15 region; that stretch reads MSLSHLYRDGEGRIDDDDDERENFEITDWDLQNEFNPNRQRHWQTKEEAT. 3 positions are modified to phosphoserine: Ser-2, Ser-59, and Ser-98. Over residues 91–102 the composition is skewed to acidic residues; the sequence is EEAELEDSDDEE. Positions 103 to 116 are enriched in basic and acidic residues; sequence RPVKQDDFPKDFGP. A Phosphoserine modification is found at Ser-144. The region spanning 149 to 195 is the G-patch domain; that stretch reads TKGIGQKLLQKMGYVPGRGLGKNAQGIINPIEAKQRKGKGAVGAYGS. Residues 179–236 form a disordered region; that stretch reads IEAKQRKGKGAVGAYGSERTTQSMQDFPVVDSEEEAEEEFQKELSQWRKDPSGSKKKP. The residue at position 210 (Ser-210) is a Phosphoserine. Over residues 217-231 the composition is skewed to basic and acidic residues; that stretch reads EFQKELSQWRKDPSG. A Nuclear localization signal motif is present at residues 700-705; it reads VKDKFN. The tract at residues 710–734 is required for nuclear speckle localization; sequence IMNRAVSSNVGAYMQPGARENIAYL.

Belongs to the TFP11/STIP family. As to quaternary structure, identified in the spliceosome C complex. Found in the Intron Large (IL) complex, a post-mRNA release spliceosomal complex containing the excised intron, U2, U5 and U6 snRNPs, and splicing factors. Interacts with TUFT1. Interacts with DHX15; indicative for a recruitment of DHX15 to the IL complex. Interacts with GCFC2.

It localises to the cytoplasm. The protein resides in the nucleus. Its function is as follows. Involved in pre-mRNA splicing, specifically in spliceosome disassembly during late-stage splicing events. Intron turnover seems to proceed through reactions in two lariat-intron associated complexes termed Intron Large (IL) and Intron Small (IS). In cooperation with DHX15 seems to mediate the transition of the U2, U5 and U6 snRNP-containing IL complex to the snRNP-free IS complex leading to efficient debranching and turnover of excised introns. May play a role in the differentiation of ameloblasts and odontoblasts or in the forming of the enamel extracellular matrix. This chain is Tuftelin-interacting protein 11 (TFIP11), found in Macaca mulatta (Rhesus macaque).